The chain runs to 411 residues: LL-diaminopimelate aminotransferase (411 aa).

Residues tyrosine 15 and glycine 42 each contribute to the substrate site. Pyridoxal 5'-phosphate is bound by residues tyrosine 72, 108–109 (SK), tyrosine 132, asparagine 187, tyrosine 218, and 246–248 (SFS). Substrate contacts are provided by lysine 109, tyrosine 132, and asparagine 187. Lysine 249 carries the post-translational modification N6-(pyridoxal phosphate)lysine. Positions 257 and 292 each coordinate pyridoxal 5'-phosphate. Residues asparagine 292 and arginine 388 each contribute to the substrate site.

The protein belongs to the class-I pyridoxal-phosphate-dependent aminotransferase family. LL-diaminopimelate aminotransferase subfamily. Homodimer. Pyridoxal 5'-phosphate is required as a cofactor.

It catalyses the reaction (2S,6S)-2,6-diaminopimelate + 2-oxoglutarate = (S)-2,3,4,5-tetrahydrodipicolinate + L-glutamate + H2O + H(+). It functions in the pathway amino-acid biosynthesis; L-lysine biosynthesis via DAP pathway; LL-2,6-diaminopimelate from (S)-tetrahydrodipicolinate (aminotransferase route): step 1/1. Involved in the synthesis of meso-diaminopimelate (m-DAP or DL-DAP), required for both lysine and peptidoglycan biosynthesis. Catalyzes the direct conversion of tetrahydrodipicolinate to LL-diaminopimelate. The sequence is that of LL-diaminopimelate aminotransferase from Gloeothece citriformis (strain PCC 7424) (Cyanothece sp. (strain PCC 7424)).